A 228-amino-acid polypeptide reads, in one-letter code: MTVETQLNPTQPVNQQIYRILRRDIVHCLIAPGTPLSEKEVSVRFNVSRQPVREAFIKLAENGLIQIRPQRGSYVNKISMAQVRNGSFIRQAIECAVARRAASMITESQCYQLEQNLHQQRIAIERKQLDDFFELDDNFHQLLTQIADCQLAWDTIENLKATVDRVRYMSFDHVSPPEMLLRQHLDIFSALQKRDGDAVERAMTQHLQEISESVRQIRQENSDWFSEE.

The HTH gntR-type domain occupies 11-78; it reads QPVNQQIYRI…PQRGSYVNKI (68 aa). The segment at residues 38-57 is a DNA-binding region (H-T-H motif); sequence EKEVSVRFNVSRQPVREAFI.

Its function is as follows. Repressor of the rspAB operon. Acts by binding directly to the upstream region of rspA. The sequence is that of HTH-type transcriptional repressor RspR (rspR) from Escherichia coli (strain K12).